The chain runs to 201 residues: uncharacterized protein (201 aa).

A run of 4 helical transmembrane segments spans residues 9 to 29, 42 to 62, 86 to 106, and 126 to 146; these read YNVFLANLVLVFGFALNILVA, FLFVTPFLGVVIGAVLYFFDV, SGVIVFFLNVLIGVVLLVVMV, and LPYLWSTTGTSIVLSLISIGM. Basic and acidic residues-rich tracts occupy residues 165-174 and 182-191; these read EPTDPNKTDN and DENKKNEKEQ. Residues 165-201 are disordered; that stretch reads EPTDPNKTDNRAVVINLDENKKNEKEQSPPSAEMTSL. Residues 192–201 are compositionally biased toward polar residues; it reads SPPSAEMTSL.

It is found in the cell membrane. This is an uncharacterized protein from Mycoplasma genitalium (strain ATCC 33530 / DSM 19775 / NCTC 10195 / G37) (Mycoplasmoides genitalium).